The following is a 147-amino-acid chain: D-aminoacyl-tRNA deacylase (147 aa).

The short motif at 136 to 137 (GP) is the Gly-cisPro motif, important for rejection of L-amino acids element.

The protein belongs to the DTD family. As to quaternary structure, homodimer.

The protein resides in the cytoplasm. It catalyses the reaction glycyl-tRNA(Ala) + H2O = tRNA(Ala) + glycine + H(+). It carries out the reaction a D-aminoacyl-tRNA + H2O = a tRNA + a D-alpha-amino acid + H(+). Its function is as follows. An aminoacyl-tRNA editing enzyme that deacylates mischarged D-aminoacyl-tRNAs. Also deacylates mischarged glycyl-tRNA(Ala), protecting cells against glycine mischarging by AlaRS. Acts via tRNA-based rather than protein-based catalysis; rejects L-amino acids rather than detecting D-amino acids in the active site. By recycling D-aminoacyl-tRNA to D-amino acids and free tRNA molecules, this enzyme counteracts the toxicity associated with the formation of D-aminoacyl-tRNA entities in vivo and helps enforce protein L-homochirality. The protein is D-aminoacyl-tRNA deacylase of Streptococcus suis (strain 98HAH33).